The chain runs to 590 residues: UvrABC system protein C (590 aa).

Positions 14–91 (DQPGCYLMKD…IKKHDPKYNV (78 aa)) constitute a GIY-YIG domain. Positions 196 to 231 (NEVKKELEEKMHEAAENLEFERAKELRDQIAHIEST) constitute a UVR domain.

This sequence belongs to the UvrC family. As to quaternary structure, interacts with UvrB in an incision complex.

Its subcellular location is the cytoplasm. Functionally, the UvrABC repair system catalyzes the recognition and processing of DNA lesions. UvrC both incises the 5' and 3' sides of the lesion. The N-terminal half is responsible for the 3' incision and the C-terminal half is responsible for the 5' incision. The polypeptide is UvrABC system protein C (Bacillus subtilis (strain 168)).